A 233-amino-acid polypeptide reads, in one-letter code: Peptidyl-tRNA hydrolase (233 aa).

Tyr-14 contacts tRNA. The active-site Proton acceptor is the His-19. 3 residues coordinate tRNA: Phe-64, Asn-66, and Asn-112. A disordered region spans residues 187–233; it reads VSPRRSGTGQKGKDKPPAPAKQQATATKAEPEPDTRSALQKLMERFK.

This sequence belongs to the PTH family. Monomer.

Its subcellular location is the cytoplasm. The enzyme catalyses an N-acyl-L-alpha-aminoacyl-tRNA + H2O = an N-acyl-L-amino acid + a tRNA + H(+). Hydrolyzes ribosome-free peptidyl-tRNAs (with 1 or more amino acids incorporated), which drop off the ribosome during protein synthesis, or as a result of ribosome stalling. Its function is as follows. Catalyzes the release of premature peptidyl moieties from peptidyl-tRNA molecules trapped in stalled 50S ribosomal subunits, and thus maintains levels of free tRNAs and 50S ribosomes. The protein is Peptidyl-tRNA hydrolase of Roseobacter denitrificans (strain ATCC 33942 / OCh 114) (Erythrobacter sp. (strain OCh 114)).